Reading from the N-terminus, the 834-residue chain is Translation factor GUF1 homolog, mitochondrial (834 aa).

The transit peptide at 1–66 (MKLCGVRSSG…RPLLAEPRRY (66 aa)) directs the protein to the mitochondrion. A tr-type G domain is found at 129-314 (ACIRNVSVVA…HIIDKVPPPC (186 aa)). Residues 138–145 (AHVDHGKT), 205–209 (DTPGH), and 259–262 (TKMD) contribute to the GTP site. Disordered stretches follow at residues 363–385 (GAAS…ASGG) and 476–507 (TGSP…SSSV). Residues 488 to 507 (ATAAETASSDDASGSGSSSV) show a composition bias toward low complexity.

This sequence belongs to the TRAFAC class translation factor GTPase superfamily. Classic translation factor GTPase family. LepA subfamily.

It is found in the mitochondrion inner membrane. The enzyme catalyses GTP + H2O = GDP + phosphate + H(+). Its function is as follows. Promotes mitochondrial protein synthesis. May act as a fidelity factor of the translation reaction, by catalyzing a one-codon backward translocation of tRNAs on improperly translocated ribosomes. Binds to mitochondrial ribosomes in a GTP-dependent manner. In Leishmania infantum, this protein is Translation factor GUF1 homolog, mitochondrial.